The following is a 469-amino-acid chain: Glutamate--tRNA ligase 2 (469 aa).

The 'HIGH' region motif lies at 10–20; sequence PSPTGFLHIGS. The 'KMSKS' region motif lies at 239–243; it reads KLSKR. ATP is bound at residue Lys-242.

The protein belongs to the class-I aminoacyl-tRNA synthetase family. Glutamate--tRNA ligase type 1 subfamily. As to quaternary structure, monomer.

Its subcellular location is the cytoplasm. The enzyme catalyses tRNA(Glu) + L-glutamate + ATP = L-glutamyl-tRNA(Glu) + AMP + diphosphate. Its function is as follows. Catalyzes the attachment of glutamate to tRNA(Glu) in a two-step reaction: glutamate is first activated by ATP to form Glu-AMP and then transferred to the acceptor end of tRNA(Glu). In Rickettsia typhi (strain ATCC VR-144 / Wilmington), this protein is Glutamate--tRNA ligase 2.